Consider the following 575-residue polypeptide: Sorting nexin-41 (575 aa).

Positions 30 to 66 are disordered; sequence TDGPDDYDFTEPSINGSSDENAQSNAVAEPIEETDEP. Polar residues predominate over residues 41–55; sequence PSINGSSDENAQSNA. Residues 101–221 enclose the PX domain; sequence QGKNPEVIRI…QKFLNPEYFW (121 aa). A 1,2-diacyl-sn-glycero-3-phospho-(1D-myo-inositol-3-phosphate) is bound by residues arginine 139, serine 141, lysine 165, and arginine 188. Residues 467–486 are disordered; it reads FRSSASPNNKSGSDSISSEV. Positions 469–484 are enriched in polar residues; that stretch reads SSASPNNKSGSDSISS.

The protein belongs to the sorting nexin family.

The protein localises to the endosome membrane. Its subcellular location is the endomembrane system. Its function is as follows. May be required for cytoplasm to vacuole transport (Cvt) and pexophagy. This chain is Sorting nexin-41 (SNX41), found in Kluyveromyces lactis (strain ATCC 8585 / CBS 2359 / DSM 70799 / NBRC 1267 / NRRL Y-1140 / WM37) (Yeast).